Here is a 106-residue protein sequence, read N- to C-terminus: ATP-dependent Clp protease adapter protein ClpS (106 aa).

Over residues 1 to 14 (MTDKAGDWQEHGPQ) the composition is skewed to basic and acidic residues. The disordered stretch occupies residues 1–21 (MTDKAGDWQEHGPQVEEAPPQ).

This sequence belongs to the ClpS family. Binds to the N-terminal domain of the chaperone ClpA.

Functionally, involved in the modulation of the specificity of the ClpAP-mediated ATP-dependent protein degradation. This Alkalilimnicola ehrlichii (strain ATCC BAA-1101 / DSM 17681 / MLHE-1) protein is ATP-dependent Clp protease adapter protein ClpS.